The following is a 104-amino-acid chain: Gallinacin-11 (104 aa).

The first 22 residues, 1 to 22 (MKLFSCLMALLLFLLQAVPGLG), serve as a signal peptide directing secretion. Intrachain disulfides connect Cys30–Cys60, Cys37–Cys53, and Cys43–Cys61.

It belongs to the beta-defensin family. As to expression, detected in outer membrane of the vitelline layer of the egg (at protein level). Expressed in the liver, gall bladder, kidney, testis, ovary and male and female reproductive tracts. Expressed in the ovarian stroma, but not in the ovarian follicles. No expression is detected in bone marrow.

The protein localises to the secreted. The protein resides in the cytoplasmic granule. Functionally, has bactericidal activity. The sequence is that of Gallinacin-11 (GAL11) from Gallus gallus (Chicken).